Here is a 339-residue protein sequence, read N- to C-terminus: Chromo domain-containing protein cec-3 (339 aa).

Residues 1–21 are disordered; that stretch reads MSNEGSREESREPEAREGKSD. The region spanning 24–84 is the Chromo domain; it reads FEVEKILAHK…KLKVTDKTEL (61 aa). Residues 91 to 105 show a composition bias toward basic residues; the sequence is QIKKNKSQKSKKRSK. Disordered stretches follow at residues 91 to 199 and 215 to 272; these read QIKK…APLS and EEKA…QRTL. Composition is skewed to basic and acidic residues over residues 106–117 and 171–183; these read TVSDHESNHDSD and AAME…RNWL. The segment covering 184-193 has biased composition (acidic residues); the sequence is DEESSDDEAE. Positions 230–241 are enriched in basic and acidic residues; sequence KPREVVIKKDPS. The segment covering 242-251 has biased composition (low complexity); sequence ESPVASASSV.

Expressed in every cell of the embryo (at protein level). In adults, expressed predominantly in the head region and the germline.

The protein localises to the chromosome. The protein resides in the nucleus. Functionally, specifically recognizes and binds methylated 'Lys-9' of histone H3 (H3K9me), with highest preference for trimethylated 'Lys-9' (H3K9me3) followed by dimethylated 'Lys-9' (H3K9me2) followed by monomethylated 'Lys-9' (H3K9me1). Plays a role in maintaining correct unc-4 expression in the VC motor neurons where unc-4 is expressed in the vulval but not in the non-vulval VC neurons. The protein is Chromo domain-containing protein cec-3 (cec-3) of Caenorhabditis elegans.